The sequence spans 483 residues: Pre-glycoprotein polyprotein GP complex (483 aa).

Glycine 2 is lipidated: N-myristoyl glycine; by host. The Extracellular segment spans residues 2-17; that stretch reads GQFISFMQEIPIFLQE. The chain crosses the membrane as a helical span at residues 18–32; the sequence is ALNIALVAVSLICIV. A topological domain (cytoplasmic) is located at residue lysine 33. The chain crosses the membrane as a helical span at residues 34 to 53; that stretch reads GLVNLYRCGLFQLMVFLVLA. Extracellular segments lie at residues 54–58 and 59–422; these read GRSCS and EETF…TLVD. Cysteine 57 serves as a coordination point for Zn(2+). N-linked (GlcNAc...) asparagine; by host glycans are attached at residues asparagine 83 and asparagine 95. 6 disulfide bridges follow: cysteine 92–cysteine 224, cysteine 134–cysteine 162, cysteine 205–cysteine 211, cysteine 269–cysteine 282, cysteine 291–cysteine 300, and cysteine 354–cysteine 375. Residues asparagine 164 and asparagine 176 are each glycosylated (N-linked (GlcNAc...) asparagine; by host). Asparagine 355, asparagine 363, asparagine 380, and asparagine 385 each carry an N-linked (GlcNAc...) asparagine; by host glycan. Residues 423–443 traverse the membrane as a helical segment; that stretch reads ICFWSTVFFTSTLFLHLIGFP. Residues 444 to 483 are Cytoplasmic-facing; it reads THEHIRGEGCPLPHRLNSMGGCRCGKYLPLKKPTIWHRRH. Zn(2+)-binding residues include histidine 445, histidine 447, cysteine 453, histidine 457, cysteine 465, cysteine 467, and histidine 483.

This sequence belongs to the arenaviridae GPC protein family. In terms of assembly, homotetramer; disulfide-linked. Homotetramer. GP2 homotetramers bind through ionic interactions with GP1 homotetramers to form the GP complex together with the stable signal peptide. The GP-C polyprotein interacts with the host protease MBTPS1/SKI-1 resulting in the polyprotein processing. Post-translationally, specific enzymatic cleavages in vivo yield mature proteins. GP-C polyprotein is cleaved in the endoplasmic reticulum by the host protease MBTPS1. Only cleaved glycoprotein is incorporated into virions. The SSP remains stably associated with the GP complex following cleavage by signal peptidase and plays crucial roles in the trafficking of GP through the secretory pathway. In terms of processing, myristoylation is necessary for GP2-mediated fusion activity.

It is found in the virion membrane. The protein localises to the host endoplasmic reticulum membrane. The protein resides in the host Golgi apparatus membrane. Its subcellular location is the host cell membrane. Class I viral fusion protein that directs fusion of viral and host endosomal membranes, leading to delivery of the nucleocapsid into the cytoplasm. Membrane fusion is mediated by irreversible conformational changes induced upon acidification in the endosome. Its function is as follows. Stable signal peptide (SSP): cleaved and functions as a signal peptide. In addition, it is also retained as the third component of the GP complex. The SSP is required for efficient glycoprotein expression, post-translational maturation cleavage of GP1 and GP2, glycoprotein transport to the cell surface plasma membrane, formation of infectious virus particles, and acid pH-dependent glycoprotein-mediated cell fusion. In terms of biological role, interacts with the host receptor. The chain is Pre-glycoprotein polyprotein GP complex from Tacaribe virus (strain V5) (TCRV).